Here is a 392-residue protein sequence, read N- to C-terminus: Immunoglobulin-binding protein EibA (392 aa).

The N-terminal stretch at 1–27 is a signal peptide; it reads MSKKFTKAVLSAAMAGVLFGVSFDIMA. Residues 28–301 are surface exposed passenger domain; that stretch reads AEQSYSALNA…IAANTRTLQQ (274 aa). The Extracellular segment spans residues 28 to 341; it reads AEQSYSALNA…GLFQPYSVGK (314 aa). A coiled-coil region spans residues 174-215; that stretch reads ESANSTIVANELEAQKGKLDAQKGELEAQKKNLGELTTRTDK. The segment at 187 to 230 is right-handed coiled-coil (RHcc); it reads AQKGKLDAQKGELEAQKKNLGELTTRTDKIDAAAAATAAKVESR. The saddle domain stretch occupies residues 231–256; it reads TLVGVSSDGTLTRAEGAKNTISVNDG. The left-handed coiled-coil (LHcc) stretch occupies residues 257–322; that stretch reads LVALSGRTDR…INENHKEMKR (66 aa). The segment at 299–341 is outer membrane translocation of the passenger domain; that stretch reads LQQHSARLDSQQRQINENHKEMKRAAAQSAALTGLFQPYSVGK. Transmembrane regions (beta stranded) follow at residues 342-352, 355-366, 369-378, and 382-392; these read FNASAAVGGYS, QALAVGVGYRFN, TAAKAGVAFS, and ASWNVGVNFEF. The translocator domain stretch occupies residues 342–392; that stretch reads FNASAAVGGYSDEQALAVGVGYRFNEQTAAKAGVAFSDGDASWNVGVNFEF.

It belongs to the autotransporter-2 (AT-2) (TC 1.B.40) family. Eib subfamily. As to quaternary structure, homotrimer; can probably form mixed heterotrimers in vivo. Will form mixed heterotrimers with EibD; these are correctly located in the outer membrane and bind IgG Fc, although less well than homotrimers. Does not form trimers with distantly related YadA from Y.enterocolitica; coexpression was lethal and one of the genes is eliminated in vivo. If the full translocator domain (299-392) is exchanged with that of YadA ('368-455'), will form heterotrimers with YadA and vice-versa. In denaturing gels runs as 2 bands of about 121 and 131 kDa; extracting the sample with 88% phenol at 70 degrees Celsius reduces part of the signal to about 45 kDa. Binds the Fc portion of IgG; binds more than 1 Fc per subunit.

The protein resides in the cell surface. Its subcellular location is the cell outer membrane. Functionally, binds (in a non-immune fashion) to the Fc portion of human IgG but not IgA; binding occurs on the cell surface. Confers the ability to survive exposure to human serum exposure. Binds to the Fc portion of human IgG and to whole mouse antibodies also via Fc, binds more than 1 Fc or IgG. In Escherichia coli, this protein is Immunoglobulin-binding protein EibA.